The following is a 101-amino-acid chain: Small ribosomal subunit protein bS18c (101 aa).

Belongs to the bacterial ribosomal protein bS18 family. As to quaternary structure, part of the 30S ribosomal subunit.

It is found in the plastid. The protein localises to the chloroplast. This Aethionema cordifolium (Lebanon stonecress) protein is Small ribosomal subunit protein bS18c.